A 467-amino-acid chain; its full sequence is Calcium-binding protein P (467 aa).

2 stretches are compositionally biased toward pro residues: residues Met1–Ala10 and Gln45–Pro62. Residues Met1–Gly311 are disordered. Positions Gln45–Gln49 match the XYPPX motif. A compositionally biased stretch (low complexity) spans Gly63–Gly74. 17 consecutive short sequence motifs (XYPPX) follow at residues Gln75 to Gln79, Gln83 to Gln87, Gln94 to Gln98, Gly104 to Gln108, Gln115 to Gln119, Gly125 to Gln129, Gln136 to Gln140, Gln146 to Gln150, Gln157 to Gln161, Gln165 to Gln169, Ala176 to Gln180, Ala187 to Gln191, Gly221 to Gln225, Ala238 to Gln242, Ala247 to Gln251, Ala256 to Gln260, and Ala275 to Gln279. 2 stretches are compositionally biased toward pro residues: residues Gln75 to Gln109 and Pro118 to Pro131. Residues Gly132–Gly145 are compositionally biased toward low complexity. Composition is skewed to low complexity over residues Gly153 to Gly193 and Ala215 to Gly246. The span at Gln253–Gly311 shows a compositional bias: low complexity. EF-hand domains are found at residues Gln399 to Tyr434 and Phe435 to Gln467. Ca(2+) contacts are provided by Asp412, Asn414, Ser416, Thr418, and Glu423.

This chain is Calcium-binding protein P (cbpP), found in Dictyostelium discoideum (Social amoeba).